Here is a 309-residue protein sequence, read N- to C-terminus: Homoserine kinase (309 aa).

ATP is bound at residue proline 95–alanine 105.

This sequence belongs to the GHMP kinase family. Homoserine kinase subfamily.

Its subcellular location is the cytoplasm. It carries out the reaction L-homoserine + ATP = O-phospho-L-homoserine + ADP + H(+). The protein operates within amino-acid biosynthesis; L-threonine biosynthesis; L-threonine from L-aspartate: step 4/5. Catalyzes the ATP-dependent phosphorylation of L-homoserine to L-homoserine phosphate. In Corynebacterium efficiens (strain DSM 44549 / YS-314 / AJ 12310 / JCM 11189 / NBRC 100395), this protein is Homoserine kinase.